A 232-amino-acid polypeptide reads, in one-letter code: Dehydrin DHN2 (232 aa).

The segment covering 1 to 12 has biased composition (polar residues); that stretch reads MSQYQNQYGAQT. 3 disordered regions span residues 1-92, 131-156, and 173-232; these read MSQY…STNT, PGTE…SGGG, and PGDK…CTGH. Residues 73–82 are compositionally biased toward gly residues; the sequence is THTGGVGGYG. Residues 131–140 are compositionally biased toward basic and acidic residues; the sequence is PGTEQSRTHT. Residues 143 to 156 are compositionally biased toward gly residues; it reads TGYGSTGYGASGGG. Basic and acidic residues predominate over residues 200–223; it reads YVREEHRVDHGEKKGIMDKIKEKL.

This sequence belongs to the plant dehydrin family.

The polypeptide is Dehydrin DHN2 (DHN2) (Pisum sativum (Garden pea)).